We begin with the raw amino-acid sequence, 125 residues long: Glycine cleavage system H protein (125 aa).

Residues 22-104 form the Lipoyl-binding domain; it reads SYIIGITDFA…YDTGWILKLT (83 aa). At K63 the chain carries N6-lipoyllysine.

It belongs to the GcvH family. In terms of assembly, the glycine cleavage system is composed of four proteins: P, T, L and H. The cofactor is (R)-lipoate.

Its function is as follows. The glycine cleavage system catalyzes the degradation of glycine. The H protein shuttles the methylamine group of glycine from the P protein to the T protein. In terms of biological role, is also involved in protein lipoylation via its role as an octanoyl/lipoyl carrier protein intermediate. This is Glycine cleavage system H protein from Listeria innocua serovar 6a (strain ATCC BAA-680 / CLIP 11262).